Here is a 333-residue protein sequence, read N- to C-terminus: Terminal uridylyltransferase 4 (333 aa).

Residues Ser-54 and 65–68 (SDVD) contribute to the UTP site. Mg(2+)-binding residues include Asp-66 and Asp-68. Arg-121 lines the RNA pocket. UTP is bound by residues 144–148 (GVRNS), Lys-169, Lys-173, and 188–189 (SY). Residues 237-302 (LGTQVLDFLH…WCIEDPYELN (66 aa)) enclose the PAP-associated domain.

This sequence belongs to the DNA polymerase type-B-like family. Monomer. The cofactor is Mg(2+). Requires Mn(2+) as cofactor.

The enzyme catalyses RNA(n) + UTP = RNA(n)-3'-uridine ribonucleotide + diphosphate. With respect to regulation, the 3' uridylated RNA substrate is involved in the selective incorporation of UTP; UTP binding is favored due to the constraint posed on the positioning of the NTP base by the continuous stacking interactions between Tyr-189 side chain, the bound NTP, and the terminal nucleoside base of the RNA substrate. In terms of biological role, terminal uridylyltransferase which, specifically, catalyzes the addition of Us to the 3'-hydroxyl group of single-stranded RNAs with a 3'-terminal U. The polypeptide is Terminal uridylyltransferase 4 (Trypanosoma brucei brucei (strain 927/4 GUTat10.1)).